Consider the following 571-residue polypeptide: Proline--tRNA ligase (571 aa).

It belongs to the class-II aminoacyl-tRNA synthetase family. ProS type 1 subfamily. In terms of assembly, homodimer.

It is found in the cytoplasm. The enzyme catalyses tRNA(Pro) + L-proline + ATP = L-prolyl-tRNA(Pro) + AMP + diphosphate. Functionally, catalyzes the attachment of proline to tRNA(Pro) in a two-step reaction: proline is first activated by ATP to form Pro-AMP and then transferred to the acceptor end of tRNA(Pro). As ProRS can inadvertently accommodate and process non-cognate amino acids such as alanine and cysteine, to avoid such errors it has two additional distinct editing activities against alanine. One activity is designated as 'pretransfer' editing and involves the tRNA(Pro)-independent hydrolysis of activated Ala-AMP. The other activity is designated 'posttransfer' editing and involves deacylation of mischarged Ala-tRNA(Pro). The misacylated Cys-tRNA(Pro) is not edited by ProRS. This Glaesserella parasuis serovar 5 (strain SH0165) (Haemophilus parasuis) protein is Proline--tRNA ligase.